Here is a 188-residue protein sequence, read N- to C-terminus: Xanthine phosphoribosyltransferase (188 aa).

Residues leucine 20 and asparagine 27 each coordinate xanthine. 127–131 provides a ligand contact to 5-phospho-alpha-D-ribose 1-diphosphate; it reads ANGNA. Xanthine is bound at residue lysine 155.

It belongs to the purine/pyrimidine phosphoribosyltransferase family. Xpt subfamily. As to quaternary structure, homodimer.

Its subcellular location is the cytoplasm. It catalyses the reaction XMP + diphosphate = xanthine + 5-phospho-alpha-D-ribose 1-diphosphate. It participates in purine metabolism; XMP biosynthesis via salvage pathway; XMP from xanthine: step 1/1. Functionally, converts the preformed base xanthine, a product of nucleic acid breakdown, to xanthosine 5'-monophosphate (XMP), so it can be reused for RNA or DNA synthesis. The protein is Xanthine phosphoribosyltransferase of Phocaeicola vulgatus (strain ATCC 8482 / DSM 1447 / JCM 5826 / CCUG 4940 / NBRC 14291 / NCTC 11154) (Bacteroides vulgatus).